Consider the following 967-residue polypeptide: LRR receptor-like serine/threonine-protein kinase ERL2 (967 aa).

Residues 1 to 27 (MRRIETMKGLFFCLGMVVFMLLGSVSP) form the signal peptide. At 28 to 585 (MNNEGKALMA…SLPKSQVFTR (558 aa)) the chain is on the extracellular side. Residues asparagine 70 and asparagine 79 are each glycosylated (N-linked (GlcNAc...) asparagine). LRR repeat units follow at residues 74–97 (NVVS…GDLM), 98–120 (NLQS…IGNC), 122–145 (SLAY…SKLK), 146–166 (QLEF…ATLT), 170–192 (NLKT…LYWN), 194–216 (VLQY…MCQL), 218–240 (GLWY…IGNC), 242–261 (SFEI…PYNI), 265–287 (QVAT…IGLM), 289–311 (ALAV…LGNL), 313–335 (FTGK…LGNM), 337–359 (RLSY…LGKL), 361–382 (QLFE…NISS), 385–406 (ALNQ…EFRN), 409–431 (SLTY…LGHI), 433–456 (NLDT…GDLE), 457–479 (HLLI…FGNL), 481–503 (SIQI…LGQL), 505–527 (NINS…LTNC), and 529–550 (SLAN…MKNF). 2 N-linked (GlcNAc...) asparagine glycosylation sites follow: asparagine 228 and asparagine 239. N-linked (GlcNAc...) asparagine glycans are attached at residues asparagine 310 and asparagine 334. Asparagine 379 carries N-linked (GlcNAc...) asparagine glycosylation. N-linked (GlcNAc...) asparagine glycans are attached at residues asparagine 414, asparagine 443, asparagine 462, and asparagine 469. 3 N-linked (GlcNAc...) asparagine glycosylation sites follow: asparagine 534, asparagine 539, and asparagine 549. Residues 586–606 (VAVICMVLGFITLICMIFIAV) form a helical membrane-spanning segment. The Cytoplasmic portion of the chain corresponds to 607 to 967 (YKSKQQKPVL…FREDISKSSL (361 aa)). Threonine 640 and threonine 648 each carry phosphothreonine. A Protein kinase domain is found at 651–921 (LDEKYIIGYG…EVSRVLLSLV (271 aa)). Residues 657 to 665 (IGYGASSTV) and lysine 679 each bind ATP. A phosphotyrosine mark is found at tyrosine 724 and tyrosine 763. The Proton acceptor role is filled by aspartate 776. At tyrosine 818 the chain carries Phosphotyrosine. Threonine 826 carries the phosphothreonine modification. A disordered region spans residues 921 to 955 (VPSPPPKKLPSPAKVQEGEERRESHSSDTTTPQWF). Residues 936–946 (QEGEERRESHS) are compositionally biased toward basic and acidic residues.

The protein belongs to the protein kinase superfamily. Ser/Thr protein kinase family. As to expression, mostly expressed in developing organs, including bud clusters, flowers, siliques and young rosettes. Also detected in mature aboveground organs, such as leaves, stems and pedicels, but barely in roots.

The protein localises to the membrane. It catalyses the reaction L-seryl-[protein] + ATP = O-phospho-L-seryl-[protein] + ADP + H(+). The enzyme catalyses L-threonyl-[protein] + ATP = O-phospho-L-threonyl-[protein] + ADP + H(+). Functionally, receptor kinase that regulates inflorescence architecture and organ shape as well as stomatal patterning, including density and clustering, together with ERL1 and ER. In Arabidopsis thaliana (Mouse-ear cress), this protein is LRR receptor-like serine/threonine-protein kinase ERL2 (ERL2).